Reading from the N-terminus, the 71-residue chain is Delta-actitoxin-Avd2b 2 (71 aa).

Positions 1–20 (MNRLLVFLMLGAAFMLVVSA) are cleaved as a signal peptide. Residues 21 to 41 (NDAYGDEPAFKDLNQGDESLG) constitute a propeptide that is removed on maturation. 3 cysteine pairs are disulfide-bonded: Cys-46–Cys-61, Cys-47–Cys-55, and Cys-49–Cys-66.

The protein belongs to the sea anemone short toxin (type III) family.

It is found in the secreted. The protein resides in the nematocyst. Functionally, voltage-gated sodium channel (Nav) inhibitor. 1 uM completely inhibits insect voltage-gated sodium channel inactivation (DmNav1 from D.melanogaster). This chain is Delta-actitoxin-Avd2b 2, found in Anemonia viridis (Snakelocks anemone).